The primary structure comprises 647 residues: DEAD-box ATP-dependent RNA helicase 18 (647 aa).

The Q motif signature appears at phenylalanine 23–alanine 51. The Helicase ATP-binding domain occupies isoleucine 54–valine 232. An ATP-binding site is contributed by alanine 67–threonine 74. A DEAD box motif is present at residues aspartate 180–aspartate 183. The Helicase C-terminal domain maps to glutamine 274–alanine 430. Residues lysine 507–valine 582 are a coiled coil. The segment covering alanine 512 to glutamate 545 has biased composition (basic and acidic residues). Disordered stretches follow at residues alanine 512 to methionine 565 and lysine 590 to arginine 647. Positions glutamate 596–leucine 610 are enriched in acidic residues. Over residues lysine 619–serine 633 the composition is skewed to basic residues.

This sequence belongs to the DEAD box helicase family. DDX55/SPB4 subfamily. Interacts with BRI1. Post-translationally, phosphorylated.

The catalysed reaction is ATP + H2O = ADP + phosphate + H(+). The sequence is that of DEAD-box ATP-dependent RNA helicase 18 from Oryza sativa subsp. japonica (Rice).